Here is a 578-residue protein sequence, read N- to C-terminus: Phenylalanine--tRNA ligase beta subunit (578 aa).

The 79-residue stretch at 292-370 (FDTDEKSVSH…RAYGFDNLEP (79 aa)) folds into the B5 domain. Positions 348, 354, 357, and 358 each coordinate Mg(2+).

This sequence belongs to the phenylalanyl-tRNA synthetase beta subunit family. Type 2 subfamily. Tetramer of two alpha and two beta subunits. It depends on Mg(2+) as a cofactor.

The protein localises to the cytoplasm. The catalysed reaction is tRNA(Phe) + L-phenylalanine + ATP = L-phenylalanyl-tRNA(Phe) + AMP + diphosphate + H(+). The chain is Phenylalanine--tRNA ligase beta subunit from Halorubrum lacusprofundi (strain ATCC 49239 / DSM 5036 / JCM 8891 / ACAM 34).